The sequence spans 331 residues: Probable deacetylase MTH_1194 (331 aa).

His118 functions as the Proton donor/acceptor in the catalytic mechanism. Zn(2+)-binding residues include Asp155, His157, and Asp244.

This sequence belongs to the histone deacetylase family. The cofactor is Zn(2+).

Its function is as follows. Probable deacetylase. This Methanothermobacter thermautotrophicus (strain ATCC 29096 / DSM 1053 / JCM 10044 / NBRC 100330 / Delta H) (Methanobacterium thermoautotrophicum) protein is Probable deacetylase MTH_1194.